The primary structure comprises 86 residues: Acyl carrier protein (86 aa).

The Carrier domain maps to 10–85; the sequence is DKIEQKVIEM…DVIKYIKERQ (76 aa). Ser-45 carries the O-(pantetheine 4'-phosphoryl)serine modification.

It belongs to the acyl carrier protein (ACP) family. Post-translationally, 4'-phosphopantetheine is transferred from CoA to a specific serine of apo-ACP by AcpS. This modification is essential for activity because fatty acids are bound in thioester linkage to the sulfhydryl of the prosthetic group.

It is found in the cytoplasm. The protein operates within lipid metabolism; fatty acid biosynthesis. Functionally, carrier of the growing fatty acid chain in fatty acid biosynthesis. This chain is Acyl carrier protein, found in Rickettsia prowazekii (strain Madrid E).